The sequence spans 486 residues: Keratin-3, type I cytoskeletal 51 kDa (486 aa).

Residues 1 to 125 (MSNYSIKQSA…AGGMDIFSTN (125 aa)) form a head region. A coil 1A region spans residues 126–161 (EKQTMQNLNDRLASYLDKVHALETANTELERKIKEW). Residues 126–442 (EKQTMQNLND…RLLDGDLSKP (317 aa)) enclose the IF rod domain. Positions 162–184 (YEKQRPGSSSGDGAKDYSKYYTM) are linker 1. Positions 185 to 276 (INDLKNQIIA…KNHEDELKGM (92 aa)) are coil 1B. The tract at residues 277 to 299 (QVTQVGQVNVEMNAAPSSDLTKI) is linker 12. A coil 2 region spans residues 300-438 (LNDMRSQYED…ETYRRLLDGD (139 aa)). A disordered region spans residues 435 to 466 (LDGDLSKPKSGGGTSTNTGSTSSKGSTRTVKR). Residues 439-486 (LSKPKSGGGTSTNTGSTSSKGSTRTVKRREIIEEVVDGKVVSTKVVDM) are tail. Over residues 449 to 461 (STNTGSTSSKGST) the composition is skewed to low complexity.

This sequence belongs to the intermediate filament family. As to quaternary structure, heterotetramer of two type I and two type II keratins.

This is Keratin-3, type I cytoskeletal 51 kDa from Xenopus laevis (African clawed frog).